A 260-amino-acid polypeptide reads, in one-letter code: Proteasome subunit alpha (260 aa).

The protein belongs to the peptidase T1A family. As to quaternary structure, the 20S proteasome core is composed of 14 alpha and 14 beta subunits that assemble into four stacked heptameric rings, resulting in a barrel-shaped structure. The two inner rings, each composed of seven catalytic beta subunits, are sandwiched by two outer rings, each composed of seven alpha subunits. The catalytic chamber with the active sites is on the inside of the barrel. Has a gated structure, the ends of the cylinder being occluded by the N-termini of the alpha-subunits. Is capped at one or both ends by the proteasome regulatory ATPase, PAN.

It is found in the cytoplasm. The formation of the proteasomal ATPase PAN-20S proteasome complex, via the docking of the C-termini of PAN into the intersubunit pockets in the alpha-rings, triggers opening of the gate for substrate entry. Interconversion between the open-gate and close-gate conformations leads to a dynamic regulation of the 20S proteasome proteolysis activity. Functionally, component of the proteasome core, a large protease complex with broad specificity involved in protein degradation. The sequence is that of Proteasome subunit alpha from Pyrococcus abyssi (strain GE5 / Orsay).